Here is a 254-residue protein sequence, read N- to C-terminus: Imidazole glycerol phosphate synthase subunit HisF (254 aa).

Catalysis depends on residues Asp-11 and Asp-130.

This sequence belongs to the HisA/HisF family. In terms of assembly, heterodimer of HisH and HisF.

Its subcellular location is the cytoplasm. The enzyme catalyses 5-[(5-phospho-1-deoxy-D-ribulos-1-ylimino)methylamino]-1-(5-phospho-beta-D-ribosyl)imidazole-4-carboxamide + L-glutamine = D-erythro-1-(imidazol-4-yl)glycerol 3-phosphate + 5-amino-1-(5-phospho-beta-D-ribosyl)imidazole-4-carboxamide + L-glutamate + H(+). It functions in the pathway amino-acid biosynthesis; L-histidine biosynthesis; L-histidine from 5-phospho-alpha-D-ribose 1-diphosphate: step 5/9. IGPS catalyzes the conversion of PRFAR and glutamine to IGP, AICAR and glutamate. The HisF subunit catalyzes the cyclization activity that produces IGP and AICAR from PRFAR using the ammonia provided by the HisH subunit. The chain is Imidazole glycerol phosphate synthase subunit HisF from Halorhodospira halophila (strain DSM 244 / SL1) (Ectothiorhodospira halophila (strain DSM 244 / SL1)).